Here is a 364-residue protein sequence, read N- to C-terminus: Alanine racemase (364 aa).

Residue Lys39 is the Proton acceptor; specific for D-alanine of the active site. N6-(pyridoxal phosphate)lysine is present on Lys39. Position 137 (Arg137) interacts with substrate. Tyr258 acts as the Proton acceptor; specific for L-alanine in catalysis. Met306 contributes to the substrate binding site.

This sequence belongs to the alanine racemase family. Pyridoxal 5'-phosphate is required as a cofactor.

It carries out the reaction L-alanine = D-alanine. Its pathway is amino-acid biosynthesis; D-alanine biosynthesis; D-alanine from L-alanine: step 1/1. Catalyzes the interconversion of L-alanine and D-alanine. May also act on other amino acids. This Methylobacterium sp. (strain 4-46) protein is Alanine racemase (alr).